The sequence spans 383 residues: Aquaporin-5 (383 aa).

The Cytoplasmic portion of the chain corresponds to 1–46 (MSVTTLNGQPTLNISGPGQTALSRLDPLKKVFTKFFSSIPQKVRGH). The helical transmembrane segment at 47–67 (VVAVIGELIGTTAFLFIAFSA) threads the bilayer. At 68 to 93 (AEVALASANDNKGDKVSYETKSISTT) the chain is on the extracellular side. A helical membrane pass occupies residues 94–114 (QILFIAFGAGISLVVNAWTFF). A topological domain (cytoplasmic) is located at residue R115. A helical transmembrane segment spans residues 116-136 (ISGGLFDPAVSIALFFVGAID). The NPA 1 motif lies at 122 to 124 (DPA). The Extracellular segment spans residues 137 to 140 (LTRC). The chain crosses the membrane as a helical span at residues 141–161 (VLLCIAQCLGAIAASAMAYGL). The Cytoplasmic segment spans residues 162–180 (YHGGLHTATTLKPGMSPAQ). Residues 181–201 (GVIVEMILTCQLCFTVLMLAA) form a helical membrane-spanning segment. Residues 202-207 (EKHEAT) lie on the Extracellular side of the membrane. The helical transmembrane segment at 208–228 (FLAPLGIGLSVFIGELAGVFW) threads the bilayer. Topologically, residues 229-252 (TGGSMNPARSLGPAVVTLSFPSYH) are cytoplasmic. The NPA 2 signature appears at 234 to 236 (NPA). Residues 253-273 (WIYWVGPIAGAGLASIIYKLI) form a helical membrane-spanning segment. Over 274–383 (KALEYETAQL…DGFFGEMYAD (110 aa)) the chain is Extracellular. Residues 332–349 (ARKSSSLVPTKSTKSGNS) are compositionally biased toward polar residues. The disordered stretch occupies residues 332–383 (ARKSSSLVPTKSTKSGNSEVKKTETVVEEPAKTQPKPAPAADDGFFGEMYAD). Over residues 350 to 362 (EVKKTETVVEEPA) the composition is skewed to basic and acidic residues. Residues 363–372 (KTQPKPAPAA) are compositionally biased toward low complexity.

It belongs to the MIP/aquaporin (TC 1.A.8) family.

The protein localises to the membrane. The catalysed reaction is H2O(in) = H2O(out). Its function is as follows. Water channel required to facilitate the transport of water across membranes. May play a role in the vegetative growth. This Botryotinia fuckeliana (strain B05.10) (Noble rot fungus) protein is Aquaporin-5.